A 209-amino-acid polypeptide reads, in one-letter code: Uracil phosphoribosyltransferase (209 aa).

Residues arginine 79, arginine 104, and 131-139 each bind 5-phospho-alpha-D-ribose 1-diphosphate; that span reads DPMLATGGS. Residues isoleucine 194 and 199–201 contribute to the uracil site; that span reads GDA. Aspartate 200 provides a ligand contact to 5-phospho-alpha-D-ribose 1-diphosphate.

It belongs to the UPRTase family. It depends on Mg(2+) as a cofactor.

The catalysed reaction is UMP + diphosphate = 5-phospho-alpha-D-ribose 1-diphosphate + uracil. Its pathway is pyrimidine metabolism; UMP biosynthesis via salvage pathway; UMP from uracil: step 1/1. Its activity is regulated as follows. Allosterically activated by GTP. In terms of biological role, catalyzes the conversion of uracil and 5-phospho-alpha-D-ribose 1-diphosphate (PRPP) to UMP and diphosphate. This Francisella tularensis subsp. novicida (strain U112) protein is Uracil phosphoribosyltransferase.